The primary structure comprises 389 residues: ATP-dependent (S)-NAD(P)H-hydrate dehydratase (389 aa).

One can recognise a YjeF C-terminal domain in the interval 53–389; it reads TLQLVRNIIP…RGGGRLPQAL (337 aa). Phosphotyrosine is present on tyrosine 85. (6S)-NADPHX is bound by residues glutamate 153 and 205-211; that span reads NHMEFSR. Residues 245 to 249 and 264 to 273 contribute to the ATP site; these read KGERD and GSSRRCGGQG. Aspartate 274 is a (6S)-NADPHX binding site. Disordered stretches follow at residues 316-350 and 369-389; these read KTRA…PGGC and RSLH…PQAL.

The protein belongs to the NnrD/CARKD family. Requires Mg(2+) as cofactor.

The protein resides in the mitochondrion. It carries out the reaction (6S)-NADHX + ATP = ADP + phosphate + NADH + H(+). The catalysed reaction is (6S)-NADPHX + ATP = ADP + phosphate + NADPH + H(+). In terms of biological role, catalyzes the dehydration of the S-form of NAD(P)HX at the expense of ATP, which is converted to ADP. Together with NAD(P)HX epimerase, which catalyzes the epimerization of the S- and R-forms, the enzyme allows the repair of both epimers of NAD(P)HX, a damaged form of NAD(P)H that is a result of enzymatic or heat-dependent hydration. This Macaca mulatta (Rhesus macaque) protein is ATP-dependent (S)-NAD(P)H-hydrate dehydratase.